The chain runs to 447 residues: MARKYFGTDGVRGRANATLTADLALRVGMAAGLAFRRGEHRHRVVIGKDTRLSGYMIENALVAGFTSVGMDVLLLGPMPTPAVGMLTRSMRADLGVMISASHNPFDDNGIKLFGPDGFKLSDQIEHEIEELIDEDLSKKLAQPMDIGRARRVEGVHARYIEYAKRTLPRDQSFEGLRVVVDCANGAAYRVAPDALWELGAEVISMGVEPDGLNINRDVGSTSPAALSAKVREVRADVGIALDGDADRVIIVDEKGHVVDGDQIMAVVAHSFKEDGRLSRDGIVATVMSNLGLERYLKDEGLTLARTSVGDRYVLERMRSDGYNVGGEQSGHIILSDYSTTGDGLLAALQVLAVVARSERPVSEVCHRFDPLPQVLKNVRYSSGKPLEHENVQSAIADAERRLANHGRLLIRPSGTEPVIRVMGEGDDFELVEGVVDEVIEALRKVAA.

Ser101 serves as the catalytic Phosphoserine intermediate. Residues Ser101, Asp242, Asp244, and Asp246 each coordinate Mg(2+). Ser101 carries the post-translational modification Phosphoserine.

It belongs to the phosphohexose mutase family. Mg(2+) is required as a cofactor. Activated by phosphorylation.

It catalyses the reaction alpha-D-glucosamine 1-phosphate = D-glucosamine 6-phosphate. Functionally, catalyzes the conversion of glucosamine-6-phosphate to glucosamine-1-phosphate. The sequence is that of Phosphoglucosamine mutase from Azorhizobium caulinodans (strain ATCC 43989 / DSM 5975 / JCM 20966 / LMG 6465 / NBRC 14845 / NCIMB 13405 / ORS 571).